The primary structure comprises 1292 residues: DNA-directed RNA polymerase subunit beta' (1292 aa).

Residues cysteine 70, cysteine 72, cysteine 85, and cysteine 88 each coordinate Zn(2+). Aspartate 532, aspartate 534, and aspartate 536 together coordinate Mg(2+). Zn(2+)-binding residues include cysteine 911, cysteine 987, cysteine 994, and cysteine 997.

This sequence belongs to the RNA polymerase beta' chain family. As to quaternary structure, the RNAP catalytic core consists of 2 alpha, 1 beta, 1 beta' and 1 omega subunit. When a sigma factor is associated with the core the holoenzyme is formed, which can initiate transcription. Mg(2+) is required as a cofactor. Zn(2+) serves as cofactor.

The enzyme catalyses RNA(n) + a ribonucleoside 5'-triphosphate = RNA(n+1) + diphosphate. In terms of biological role, DNA-dependent RNA polymerase catalyzes the transcription of DNA into RNA using the four ribonucleoside triphosphates as substrates. The chain is DNA-directed RNA polymerase subunit beta' from Mycoplasma genitalium (strain ATCC 33530 / DSM 19775 / NCTC 10195 / G37) (Mycoplasmoides genitalium).